Reading from the N-terminus, the 214-residue chain is MKILVTGFNPFGSEKINPALEAVKLLPSEINGAEVRWVEIPTVFYKSSEVLEAEILRYQPDAVLCIGQAGGRTGLTPERVAINQDDARIPDNEGNQPIDTPIRIDGASAYFSSLPIKAMVQAIKKQGLPAVVSNSAGTFVCNHLMYQALYLVDKKFPNMRAGFMHIPYMMEQVVNKPNTAGMSLCDIVRGIEVAIEAIVDYKDKDLQLVGGETH.

Catalysis depends on residues Glu78, Cys141, and His165.

The protein belongs to the peptidase C15 family. Homotetramer.

It is found in the cytoplasm. The enzyme catalyses Release of an N-terminal pyroglutamyl group from a polypeptide, the second amino acid generally not being Pro.. In terms of biological role, removes 5-oxoproline from various penultimate amino acid residues except L-proline. In Streptococcus pneumoniae (strain 70585), this protein is Pyrrolidone-carboxylate peptidase.